Here is a 218-residue protein sequence, read N- to C-terminus: Putative receptor like protein 25 (218 aa).

Residues 1 to 178 (MIYTKNAYGS…QEDAKVLNWK (178 aa)) are Extracellular-facing. LRR repeat units lie at residues 34–58 (LTLY…IGLL), 59–82 (KALI…MANL), 83–106 (IELE…LKTL), and 108–131 (FLGY…QITG). N-linked (GlcNAc...) asparagine glycosylation occurs at N65. N113 is a glycosylation site (N-linked (GlcNAc...) asparagine). The helical transmembrane segment at 179-199 (AVATGYGPGVFFGLAIAQIIA) threads the bilayer. Over 200–218 (SYKPEWLVKIIGPNKRRNH) the chain is Cytoplasmic.

Belongs to the RLP family.

The protein localises to the cell membrane. This Arabidopsis thaliana (Mouse-ear cress) protein is Putative receptor like protein 25.